Consider the following 252-residue polypeptide: Phosphate import ATP-binding protein PstB (252 aa).

Residues 6–247 (MSIRDLNFYY…PAQKATEDYI (242 aa)) form the ABC transporter domain. Residue 38–45 (GPSGCGKS) coordinates ATP.

This sequence belongs to the ABC transporter superfamily. Phosphate importer (TC 3.A.1.7) family. As to quaternary structure, the complex is composed of two ATP-binding proteins (PstB), two transmembrane proteins (PstC and PstA) and a solute-binding protein (PstS).

It is found in the cell inner membrane. It catalyses the reaction phosphate(out) + ATP + H2O = ADP + 2 phosphate(in) + H(+). Its function is as follows. Part of the ABC transporter complex PstSACB involved in phosphate import. Responsible for energy coupling to the transport system. This Psychrobacter cryohalolentis (strain ATCC BAA-1226 / DSM 17306 / VKM B-2378 / K5) protein is Phosphate import ATP-binding protein PstB.